A 122-amino-acid chain; its full sequence is UPF0382 membrane protein SE_0353 (122 aa).

Transmembrane regions (helical) follow at residues 3 to 23 (VFII…AFGA), 46 to 66 (MYHG…SINV), 69 to 89 (AGWL…FLAL), and 98 to 118 (ITPI…IATL).

It belongs to the UPF0382 family.

Its subcellular location is the cell membrane. The protein is UPF0382 membrane protein SE_0353 of Staphylococcus epidermidis (strain ATCC 12228 / FDA PCI 1200).